A 73-amino-acid chain; its full sequence is Large ribosomal subunit protein bL28 (73 aa).

The protein belongs to the bacterial ribosomal protein bL28 family.

The polypeptide is Large ribosomal subunit protein bL28 (Buchnera aphidicola subsp. Cinara cedri (strain Cc)).